Consider the following 554-residue polypeptide: Hydroxylamine reductase (554 aa).

The [2Fe-2S] cluster site is built by cysteine 3, cysteine 6, cysteine 18, and cysteine 25. Positions 252, 276, 320, 408, 436, 461, 495, and 497 each coordinate hybrid [4Fe-2O-2S] cluster. Residue cysteine 408 is modified to Cysteine persulfide.

It belongs to the HCP family. It depends on [2Fe-2S] cluster as a cofactor. Hybrid [4Fe-2O-2S] cluster is required as a cofactor.

It is found in the cytoplasm. The enzyme catalyses A + NH4(+) + H2O = hydroxylamine + AH2 + H(+). Its function is as follows. Catalyzes the reduction of hydroxylamine to form NH(3) and H(2)O. The polypeptide is Hydroxylamine reductase (Shewanella baltica (strain OS185)).